The following is a 1296-amino-acid chain: Phosphoribosylformylglycinamidine synthase (1296 aa).

A disordered region spans residues 304–323 (WPGAATGSGGEIRDEGATGR). ATP-binding positions include 306–317 (GAATGSGGEIRD) and Ala677. Mg(2+) contacts are provided by Asp678, Glu717, Asn721, and Asp885. Position 887 (Ser887) interacts with ATP. Basic and acidic residues predominate over residues 1000–1013 (PDCADQEHQAKQDE). Residues 1000 to 1019 (PDCADQEHQAKQDESDPGLN) form a disordered region. Residues 1043-1296 (VAVLREQGVN…MFRNARKQLG (254 aa)) enclose the Glutamine amidotransferase type-1 domain. The active-site Nucleophile is the Cys1136. Catalysis depends on residues His1261 and Glu1263.

The protein in the N-terminal section; belongs to the FGAMS family. In terms of assembly, monomer.

It localises to the cytoplasm. The catalysed reaction is N(2)-formyl-N(1)-(5-phospho-beta-D-ribosyl)glycinamide + L-glutamine + ATP + H2O = 2-formamido-N(1)-(5-O-phospho-beta-D-ribosyl)acetamidine + L-glutamate + ADP + phosphate + H(+). It functions in the pathway purine metabolism; IMP biosynthesis via de novo pathway; 5-amino-1-(5-phospho-D-ribosyl)imidazole from N(2)-formyl-N(1)-(5-phospho-D-ribosyl)glycinamide: step 1/2. Its function is as follows. Phosphoribosylformylglycinamidine synthase involved in the purines biosynthetic pathway. Catalyzes the ATP-dependent conversion of formylglycinamide ribonucleotide (FGAR) and glutamine to yield formylglycinamidine ribonucleotide (FGAM) and glutamate. The chain is Phosphoribosylformylglycinamidine synthase from Yersinia pseudotuberculosis serotype I (strain IP32953).